The primary structure comprises 245 residues: 1-(5-phosphoribosyl)-5-[(5-phosphoribosylamino)methylideneamino] imidazole-4-carboxamide isomerase (245 aa).

Catalysis depends on Asp7, which acts as the Proton acceptor. Asp129 functions as the Proton donor in the catalytic mechanism.

The protein belongs to the HisA/HisF family.

It is found in the cytoplasm. It catalyses the reaction 1-(5-phospho-beta-D-ribosyl)-5-[(5-phospho-beta-D-ribosylamino)methylideneamino]imidazole-4-carboxamide = 5-[(5-phospho-1-deoxy-D-ribulos-1-ylimino)methylamino]-1-(5-phospho-beta-D-ribosyl)imidazole-4-carboxamide. The protein operates within amino-acid biosynthesis; L-histidine biosynthesis; L-histidine from 5-phospho-alpha-D-ribose 1-diphosphate: step 4/9. The protein is 1-(5-phosphoribosyl)-5-[(5-phosphoribosylamino)methylideneamino] imidazole-4-carboxamide isomerase of Salmonella arizonae (strain ATCC BAA-731 / CDC346-86 / RSK2980).